The chain runs to 1898 residues: 1-phosphatidylinositol 4,5-bisphosphate phosphodiesterase epsilon-1 (1898 aa).

Residues Phe66–Lys328 enclose the Ras-GEF domain. Disordered regions lie at residues Gln419–Val444 and Thr569–Gly722. Positions Thr569–Ser583 are enriched in polar residues. The span at Ser590–Gly605 shows a compositional bias: basic residues. Composition is skewed to low complexity over residues Pro625–Gly637, Tyr666–Ser687, and Ser701–Gly716. Positions Glu910–Lys1058 constitute a PI-PLC X-box domain. Active-site residues include His925 and His970. Disordered regions lie at residues Gln1082–Thr1178 and Glu1238–Leu1274. Over residues Thr1098–Glu1123 the composition is skewed to acidic residues. Residues Val1124–Ala1144 are compositionally biased toward basic and acidic residues. A compositionally biased stretch (polar residues) spans Asn1146–Ser1155. Low complexity-rich tracts occupy residues Lys1163–Lys1172 and Ala1242–Arg1253. The PI-PLC Y-box domain occupies Ala1279–Leu1385. The C2 domain maps to Leu1391–Ile1517. The region spanning Gln1570 to Ser1665 is the Ras-associating 1 domain. Low complexity predominate over residues Gly1680–Thr1694. The segment at Gly1680–Ser1711 is disordered. The Ras-associating 2 domain maps to Asp1738–Asp1857.

Interacts (via Ras-associating domain 1) with let-60 (in GTP-bound form). Ca(2+) is required as a cofactor. In terms of tissue distribution, expressed in the spermatheca, vulva, intestine and excretory cells. Expressed in sensory neurons AWC, AFD, ASE, ASG and BAG, interneurons, ventral nerve cord neurons and tail neurons. Expressed in body muscles.

The catalysed reaction is a 1,2-diacyl-sn-glycero-3-phospho-(1D-myo-inositol-4,5-bisphosphate) + H2O = 1D-myo-inositol 1,4,5-trisphosphate + a 1,2-diacyl-sn-glycerol + H(+). Functionally, the production of the second messenger molecules diacylglycerol (DAG) and inositol 1,4,5-trisphosphate (IP3) is mediated by activated phosphatidylinositol-specific phospholipase C enzymes. plc-1 is a bifunctional enzyme which also regulates small GTPases of the Ras superfamily through its Ras guanine-exchange factor (RasGEF) activity. By activating IP3 receptor itr-1-mediated intracellular Ca(2+) release via the production of IP3, regulates ovulation by controlling contraction and/or dilation of the distal spermatheca valve during oocyte entry and the timing of the dilation of the spermatheca-uterine valve during oocyte exit. In a similar manner, plays an essential role in epidermal morphogenesis by regulating migration of epidermal cells during ventral closure and to a lesser extent by regulating epidermal cell dorsal intercalation. Involved in the immune response to S.aureus bacterium by activating kinase dkf-1 via the production of DAG which in turn activates transcription factor hlh-30. In ASER neurons, required for adjusting the orientation behavior in salt gradients based on the memory of previous salt concentration encountered. This chain is 1-phosphatidylinositol 4,5-bisphosphate phosphodiesterase epsilon-1, found in Caenorhabditis elegans.